Here is a 92-residue protein sequence, read N- to C-terminus: UPF0223 protein SP_1404 (92 aa).

The protein belongs to the UPF0223 family.

The protein is UPF0223 protein SP_1404 of Streptococcus pneumoniae serotype 4 (strain ATCC BAA-334 / TIGR4).